The sequence spans 258 residues: Chemokine-binding protein (258 aa).

The first 17 residues, 1–17, serve as a signal peptide directing secretion; that stretch reads MKQYIVLACMCLAAAAM. The segment at 65-93 is disordered; sequence TEITESESDPDPEVESEDDSTSVEDVDPP. Residues 68–91 are compositionally biased toward acidic residues; it reads TESESDPDPEVESEDDSTSVEDVD.

It belongs to the orthopoxvirus OPG001 family. As to quaternary structure, binds to host CC chemokines, such as RANTES/CCL5, MIP-1alpha/CCL3, MCP-1/CCL2 and eotaxin.

It localises to the secreted. In terms of biological role, inhibits host immune defense by binding to host chemokines. Binds host CC chemokines (beta chemokines) such as RANTES with high affinity, but not CXC or C chemokines (alpha and gamma chemokines). The polypeptide is Chemokine-binding protein (OPG001) (Homo sapiens (Human)).